Here is a 217-residue protein sequence, read N- to C-terminus: 3,4-dihydroxy-2-butanone 4-phosphate synthase (217 aa).

Residues 37 to 38 (RE), D42, 150 to 154 (RGGHT), and E174 contribute to the D-ribulose 5-phosphate site. E38 is a binding site for Mg(2+). H153 contacts Mg(2+).

This sequence belongs to the DHBP synthase family. In terms of assembly, homodimer. Mg(2+) serves as cofactor. Mn(2+) is required as a cofactor.

It carries out the reaction D-ribulose 5-phosphate = (2S)-2-hydroxy-3-oxobutyl phosphate + formate + H(+). It participates in cofactor biosynthesis; riboflavin biosynthesis; 2-hydroxy-3-oxobutyl phosphate from D-ribulose 5-phosphate: step 1/1. Its function is as follows. Catalyzes the conversion of D-ribulose 5-phosphate to formate and 3,4-dihydroxy-2-butanone 4-phosphate. The sequence is that of 3,4-dihydroxy-2-butanone 4-phosphate synthase from Klebsiella pneumoniae subsp. pneumoniae (strain ATCC 700721 / MGH 78578).